The chain runs to 99 residues: DNA-binding protein Fis (99 aa).

Positions 75-94 (QTRAATMLGINRGTLRKKLK) form a DNA-binding region, H-T-H motif.

It belongs to the transcriptional regulatory Fis family. As to quaternary structure, homodimer.

In terms of biological role, activates ribosomal RNA transcription. Plays a direct role in upstream activation of rRNA promoters. The chain is DNA-binding protein Fis from Pasteurella multocida (strain Pm70).